The chain runs to 34 residues: uncharacterized protein (34 aa).

This is an uncharacterized protein from Rhizobium radiobacter (Agrobacterium tumefaciens).